The chain runs to 239 residues: Putative ABC transporter ATP-binding protein AlbC (239 aa).

The ABC transporter domain maps to 4–238; the sequence is LDIHDVSVWY…RREFFEVIGH (235 aa). 37-44 provides a ligand contact to ATP; that stretch reads GVNGAGKT.

Belongs to the ABC transporter superfamily.

Functionally, involved in the production of the bacteriocin subtilosin. Required for immunity to subtilosin. The sequence is that of Putative ABC transporter ATP-binding protein AlbC (albC) from Bacillus subtilis (strain 168).